The chain runs to 482 residues: UDP-N-acetylmuramoyl-L-alanyl-D-glutamate--2,6-diaminopimelate ligase (482 aa).

Serine 30 provides a ligand contact to UDP-N-acetyl-alpha-D-muramoyl-L-alanyl-D-glutamate. Residue glycine 111–threonine 117 coordinates ATP. Residues threonine 153–threonine 154, serine 180, glutamine 186, and arginine 188 contribute to the UDP-N-acetyl-alpha-D-muramoyl-L-alanyl-D-glutamate site. Lysine 220 is subject to N6-carboxylysine. Meso-2,6-diaminopimelate-binding positions include arginine 378, aspartate 402–arginine 405, glycine 455, and glutamate 459. The Meso-diaminopimelate recognition motif motif lies at aspartate 402–arginine 405.

The protein belongs to the MurCDEF family. MurE subfamily. It depends on Mg(2+) as a cofactor. Carboxylation is probably crucial for Mg(2+) binding and, consequently, for the gamma-phosphate positioning of ATP.

It localises to the cytoplasm. It carries out the reaction UDP-N-acetyl-alpha-D-muramoyl-L-alanyl-D-glutamate + meso-2,6-diaminopimelate + ATP = UDP-N-acetyl-alpha-D-muramoyl-L-alanyl-gamma-D-glutamyl-meso-2,6-diaminopimelate + ADP + phosphate + H(+). It functions in the pathway cell wall biogenesis; peptidoglycan biosynthesis. Its function is as follows. Catalyzes the addition of meso-diaminopimelic acid to the nucleotide precursor UDP-N-acetylmuramoyl-L-alanyl-D-glutamate (UMAG) in the biosynthesis of bacterial cell-wall peptidoglycan. The sequence is that of UDP-N-acetylmuramoyl-L-alanyl-D-glutamate--2,6-diaminopimelate ligase from Bacteroides thetaiotaomicron (strain ATCC 29148 / DSM 2079 / JCM 5827 / CCUG 10774 / NCTC 10582 / VPI-5482 / E50).